A 362-amino-acid polypeptide reads, in one-letter code: Cobalt-precorrin-5B C(1)-methyltransferase (362 aa).

It belongs to the CbiD family.

It catalyses the reaction Co-precorrin-5B + S-adenosyl-L-methionine = Co-precorrin-6A + S-adenosyl-L-homocysteine. Its pathway is cofactor biosynthesis; adenosylcobalamin biosynthesis; cob(II)yrinate a,c-diamide from sirohydrochlorin (anaerobic route): step 6/10. Its function is as follows. Catalyzes the methylation of C-1 in cobalt-precorrin-5B to form cobalt-precorrin-6A. This chain is Cobalt-precorrin-5B C(1)-methyltransferase, found in Methanocaldococcus jannaschii (strain ATCC 43067 / DSM 2661 / JAL-1 / JCM 10045 / NBRC 100440) (Methanococcus jannaschii).